The primary structure comprises 367 residues: Sigma54-dependent transcriptional regulator SfnR (367 aa).

A Sigma-54 factor interaction domain is found at 21–250 (QVFEDPKSQA…LENVIHHTLL (230 aa)). Residues 49-56 (GETGTGKE) and 112-121 (ADGGTLFLDE) each bind ATP.

Functionally, involved in the dimethyl sulfide degradation pathway. Activates the expression of sfnG and sfnF. The polypeptide is Sigma54-dependent transcriptional regulator SfnR (Pseudomonas fluorescens (strain Pf0-1)).